Here is a 261-residue protein sequence, read N- to C-terminus: MTTTTTRFVQLAACAAASLLAVAASGAAAQGVGSVITQAVFNSMLPNRDNSQCPARGFYTYDAFIAAANSFPAFGTSGGSAELIRRELAAFFGQTSHETTGGTRGSSDQFQWGYCFKEEINKATSPPYYGRGPIQLTGQSNYQAAGNALGLDLVGNPDLVSTDAVVSFKTAIWFWMTAQGNKPSCHDVILGRWTPSAADTAAGRVPGYGVITNIINGGIECGVGQNDANVDRIGYYKRYCDMLGAGYGSNLDCYNQRNFAS.

A signal peptide spans 1-29; the sequence is MTTTTTRFVQLAACAAASLLAVAASGAAA. 2 disulfide bridges follow: Cys-53–Cys-115 and Cys-221–Cys-253. The active-site Proton donor is the Glu-98.

Belongs to the glycosyl hydrolase 19 family. Chitinase class II subfamily. Expressed in roots, leaves, sheaths and meristems.

The catalysed reaction is Random endo-hydrolysis of N-acetyl-beta-D-glucosaminide (1-&gt;4)-beta-linkages in chitin and chitodextrins.. This is Chitinase 8 (Cht8) from Oryza sativa subsp. japonica (Rice).